The chain runs to 356 residues: Histidinol-phosphate aminotransferase (356 aa).

Lysine 214 carries the N6-(pyridoxal phosphate)lysine modification.

Belongs to the class-II pyridoxal-phosphate-dependent aminotransferase family. Histidinol-phosphate aminotransferase subfamily. As to quaternary structure, homodimer. Requires pyridoxal 5'-phosphate as cofactor.

It catalyses the reaction L-histidinol phosphate + 2-oxoglutarate = 3-(imidazol-4-yl)-2-oxopropyl phosphate + L-glutamate. Its pathway is amino-acid biosynthesis; L-histidine biosynthesis; L-histidine from 5-phospho-alpha-D-ribose 1-diphosphate: step 7/9. The protein is Histidinol-phosphate aminotransferase of Escherichia coli O17:K52:H18 (strain UMN026 / ExPEC).